Here is a 498-residue protein sequence, read N- to C-terminus: Glycerol kinase (498 aa).

Residue threonine 14 participates in ADP binding. Residues threonine 14, threonine 15, and serine 16 each contribute to the ATP site. Threonine 14 is a binding site for sn-glycerol 3-phosphate. Arginine 18 serves as a coordination point for ADP. Sn-glycerol 3-phosphate contacts are provided by arginine 84, glutamate 85, tyrosine 136, and aspartate 245. Positions 84, 85, 136, 245, and 246 each coordinate glycerol. Threonine 267 and glycine 310 together coordinate ADP. ATP contacts are provided by threonine 267, glycine 310, glutamine 314, and glycine 410. Residues glycine 410 and asparagine 414 each coordinate ADP.

This sequence belongs to the FGGY kinase family.

The catalysed reaction is glycerol + ATP = sn-glycerol 3-phosphate + ADP + H(+). Its pathway is polyol metabolism; glycerol degradation via glycerol kinase pathway; sn-glycerol 3-phosphate from glycerol: step 1/1. Inhibited by fructose 1,6-bisphosphate (FBP). In terms of biological role, key enzyme in the regulation of glycerol uptake and metabolism. Catalyzes the phosphorylation of glycerol to yield sn-glycerol 3-phosphate. This is Glycerol kinase from Rhodospirillum centenum (strain ATCC 51521 / SW).